Here is a 250-residue protein sequence, read N- to C-terminus: Zinc finger protein lsy-27 (250 aa).

2 consecutive C2H2-type zinc fingers follow at residues F25–H48 and H52–H75. The C2H2-type 3; degenerate zinc finger occupies F81–Q104. Disordered regions lie at residues I126–R177 and Q226–E250. Residues S148 to S165 are compositionally biased toward low complexity. Positions M239–E250 are enriched in basic and acidic residues.

Involved in regulating left/right asymmetric differentiation of the gustatory ASE neurons. Plays a role in modulating expression of LIM/homeobox protein lim-6. This is Zinc finger protein lsy-27 from Caenorhabditis elegans.